We begin with the raw amino-acid sequence, 186 residues long: Serine hydrolase RBBP9 (186 aa).

Residues leucine 63 to glutamate 67 are involved in binding to RB1. Catalysis depends on charge relay system residues serine 75, aspartate 138, and histidine 165.

Belongs to the RBBP9 family. As to quaternary structure, interacts with RB1; the interaction disrupts RB1 binding to E2F1. Interacts with RBL1 and RBL2. As to expression, highly expressed in the spleen, testis and kidney. Also found in the heart, liver, lung and brain.

The enzyme catalyses valacyclovir + H2O = acyclovir + L-valine + H(+). Its function is as follows. Serine hydrolase. Catalyzes the hydrolytic activation of amino acid ester of the antiviral prodrug valacyclovir to its corresponding active drug, acyclovir. May negatively regulate basal or autocrine TGF-beta signaling by suppressing SMAD2-SMAD3 phosphorylation. May play a role in the transformation process due to its capacity to confer resistance to the growth-inhibitory effects of TGF-beta through interaction with RB1 and the subsequent displacement of E2F1. The protein is Serine hydrolase RBBP9 of Rattus norvegicus (Rat).